A 346-amino-acid polypeptide reads, in one-letter code: Flap endonuclease 1 (346 aa).

Positions M1–K102 are N-domain. Residues D31, D84, E156, E158, D177, D179, and D239 each coordinate Mg(2+). Residues D120–G261 form an I-domain region.

Belongs to the XPG/RAD2 endonuclease family. FEN1 subfamily. As to quaternary structure, interacts with PCNA. PCNA stimulates the nuclease activity without altering cleavage specificity. Mg(2+) serves as cofactor.

In terms of biological role, structure-specific nuclease with 5'-flap endonuclease and 5'-3' exonuclease activities involved in DNA replication and repair. During DNA replication, cleaves the 5'-overhanging flap structure that is generated by displacement synthesis when DNA polymerase encounters the 5'-end of a downstream Okazaki fragment. Binds the unpaired 3'-DNA end and kinks the DNA to facilitate 5' cleavage specificity. Cleaves one nucleotide into the double-stranded DNA from the junction in flap DNA, leaving a nick for ligation. Also involved in the base excision repair (BER) pathway. Acts as a genome stabilization factor that prevents flaps from equilibrating into structures that lead to duplications and deletions. Also possesses 5'-3' exonuclease activity on nicked or gapped double-stranded DNA. In Pyrobaculum islandicum (strain DSM 4184 / JCM 9189 / GEO3), this protein is Flap endonuclease 1.